Here is a 345-residue protein sequence, read N- to C-terminus: D-apiose dehydrogenase (345 aa).

Position 15–16 (15–16 (FF)) interacts with NAD(+). Mg(2+)-binding residues include Trp-24, Lys-25, Val-27, and Ala-30. Residues Asp-37, Ser-79, 97–98 (QK), Asn-126, and 165–167 (QPY) each bind NAD(+). Residue Lys-98 coordinates substrate. Residues Gln-165, Asp-178, His-182, and Tyr-232 each contribute to the substrate site.

It belongs to the Gfo/Idh/MocA family.

It catalyses the reaction D-apiofuranose + NAD(+) = D-apionolactone + NADH + H(+). It participates in carbohydrate metabolism. Involved in catabolism of D-apiose. Catalyzes oxidation of D-apiose to D-apionolactone. This is D-apiose dehydrogenase from Rhizobium rhizogenes (strain K84 / ATCC BAA-868) (Agrobacterium radiobacter).